A 338-amino-acid chain; its full sequence is MSSDPTGRPIETRKLRHLEACLRPESQYQKVKTGLDSVPWPYRALPESNLEEMRLDTVFLGRRLKAPVLIGAMTGGAEKAGVINRNLATAARNLGLGMMLGSQRVMLEHPDAWESFNVREVAPEILLIGNLGAAQFMLGYGAEQARRAVDEVMADALAIHLNPLQEALQRGGDTRWQGVTYRLKQVARELDFPVIIKEVGHGLDAATLRALADGPFAAYDVAGAGGTSWARVEQLVAHGQVHSPDLCELGVPTAQALRQARKTLPGAQLIASGGIRSGLDAARALSLGAEVVAVARPLLEPALDSSEAAEAWLRNFIQELRVALFVGGYRDVREVRGG.

13-14 (RK) contributes to the substrate binding site. FMN is bound by residues 72–74 (AMT), S102, and N130. 102–104 (SQR) is a binding site for substrate. Q165 provides a ligand contact to substrate. E166 is a Mg(2+) binding site. Residues K197, T227, 274–276 (GIR), and 295–296 (AR) each bind FMN.

Belongs to the IPP isomerase type 2 family. Homooctamer. Dimer of tetramers. FMN is required as a cofactor. Requires NADPH as cofactor. The cofactor is Mg(2+).

The protein localises to the cytoplasm. The catalysed reaction is isopentenyl diphosphate = dimethylallyl diphosphate. Involved in the biosynthesis of isoprenoids. Catalyzes the 1,3-allylic rearrangement of the homoallylic substrate isopentenyl (IPP) to its allylic isomer, dimethylallyl diphosphate (DMAPP). This is Isopentenyl-diphosphate delta-isomerase from Deinococcus radiodurans (strain ATCC 13939 / DSM 20539 / JCM 16871 / CCUG 27074 / LMG 4051 / NBRC 15346 / NCIMB 9279 / VKM B-1422 / R1).